A 399-amino-acid polypeptide reads, in one-letter code: Lysosomal acid lipase/cholesteryl ester hydrolase (399 aa).

A signal peptide spans 1–27 (MKMRFLGLVVCLVLWTLHSEASGGKLT). Positions 28–76 (AVNPETNMNVSEIISYWGFPSEEYLVETEDGYILCLNRIPHGRKNHSDK) are cleaved as a propeptide — removed in mature form. N-linked (GlcNAc...) asparagine glycans are attached at residues Asn-36, Asn-72, Asn-101, and Asn-161. The AB hydrolase-1 domain maps to 80 to 380 (PVVFLQHGLL…EWEHLDFIWG (301 aa)). Ser-174 functions as the Charge relay system in the catalytic mechanism. N-linked (GlcNAc...) asparagine glycans are attached at residues Asn-273 and Asn-321. His-374 (charge relay system) is an active-site residue.

It belongs to the AB hydrolase superfamily. Lipase family. In terms of assembly, monomer. Glycosylation is not essential for catalytic activity.

The protein localises to the lysosome. The catalysed reaction is a sterol ester + H2O = a sterol + a fatty acid + H(+). It carries out the reaction cholesteryl (9Z-octadecenoate) + H2O = cholesterol + (9Z)-octadecenoate + H(+). It catalyses the reaction a triacylglycerol + H2O = a 1,2-diacylglycerol + a fatty acid + H(+). The enzyme catalyses 1,2-di-(9Z-octadecenoyl)-glycerol + (9Z)-octadecenoate + H(+) = 1,2,3-tri-(9Z-octadecenoyl)-glycerol + H2O. The catalysed reaction is a 1,2-diacylglycerol + H2O = a 1-acylglycerol + a fatty acid + H(+). It carries out the reaction 1,2-di-(9Z-octadecenoyl)-glycerol + H2O = 1-(9Z-octadecenoyl)-glycerol + (9Z)-octadecenoate + H(+). It catalyses the reaction a 1,3-diacylglycerol + H2O = a 1-acylglycerol + a fatty acid + H(+). The enzyme catalyses 1,3-di-(9Z-octadecenoyl)-glycerol + H2O = 1-(9Z-octadecenoyl)-glycerol + (9Z)-octadecenoate + H(+). In terms of biological role, catalyzes the deacylation of cholesteryl ester core lipids of endocytosed low density lipoproteins to generate free fatty acids and cholesterol. Hydrolyzes triglycerides (1,2,3-triacylglycerol) and diglycerides (such as 1,2-diacylglycerol and 1,3-diacylglycerol) with preference for the acyl moieties at the sn-1 or sn-3 positions. The chain is Lysosomal acid lipase/cholesteryl ester hydrolase (LIPA) from Macaca fascicularis (Crab-eating macaque).